Reading from the N-terminus, the 280-residue chain is 2-dehydro-3-deoxyphosphooctonate aldolase (280 aa).

The protein belongs to the KdsA family.

The protein localises to the cytoplasm. It catalyses the reaction D-arabinose 5-phosphate + phosphoenolpyruvate + H2O = 3-deoxy-alpha-D-manno-2-octulosonate-8-phosphate + phosphate. Its pathway is carbohydrate biosynthesis; 3-deoxy-D-manno-octulosonate biosynthesis; 3-deoxy-D-manno-octulosonate from D-ribulose 5-phosphate: step 2/3. It participates in bacterial outer membrane biogenesis; lipopolysaccharide biosynthesis. The polypeptide is 2-dehydro-3-deoxyphosphooctonate aldolase (Neisseria meningitidis serogroup A / serotype 4A (strain DSM 15465 / Z2491)).